We begin with the raw amino-acid sequence, 285 residues long: Geranyl diphosphate 2-C-methyltransferase (285 aa).

It belongs to the geranyl diphosphate 2-C-methyltransferase family. Mg(2+) is required as a cofactor.

It carries out the reaction (2E)-geranyl diphosphate + S-adenosyl-L-methionine = (E)-2-methylgeranyl diphosphate + S-adenosyl-L-homocysteine + H(+). In terms of biological role, catalyzes the SAM-dependent methylation of geranyl diphosphate (GPP) to yield (E)-2-methylgeranyl diphosphate (2-MeGPP). The chain is Geranyl diphosphate 2-C-methyltransferase from Saccharopolyspora erythraea (strain ATCC 11635 / DSM 40517 / JCM 4748 / NBRC 13426 / NCIMB 8594 / NRRL 2338).